The chain runs to 581 residues: Adenine deaminase (581 aa).

The protein belongs to the metallo-dependent hydrolases superfamily. Adenine deaminase family. It depends on Mn(2+) as a cofactor.

The enzyme catalyses adenine + H2O + H(+) = hypoxanthine + NH4(+). The protein is Adenine deaminase of Clostridium botulinum (strain Eklund 17B / Type B).